A 193-amino-acid chain; its full sequence is dCTP deaminase (193 aa).

DCTP is bound by residues 110-115 (RSSLAR), D128, 136-138 (VLE), Y171, K178, and Q182. E138 serves as the catalytic Proton donor/acceptor. A disordered region spans residues 169–193 (RPYNRREDAKYRNQQGAVASRIDKD).

It belongs to the dCTP deaminase family. In terms of assembly, homotrimer.

It catalyses the reaction dCTP + H2O + H(+) = dUTP + NH4(+). The protein operates within pyrimidine metabolism; dUMP biosynthesis; dUMP from dCTP (dUTP route): step 1/2. Functionally, catalyzes the deamination of dCTP to dUTP. This chain is dCTP deaminase, found in Escherichia coli O8 (strain IAI1).